We begin with the raw amino-acid sequence, 1040 residues long: uncharacterized protein (1040 aa).

Residues 403–588 (RLEESSKKGG…YSLIKFLRIK (186 aa)) form the Helicase ATP-binding domain. 416–423 (DDMGLGKT) contributes to the ATP binding site. An RING-type zinc finger spans residues 746–798 (CSLCMDVVAELLIIVPCGHFLCRECLTHVITSSEDMAKQTSNENISPKCSVCE). The region spanning 866-1032 (KIEKALNAVK…ISRLNTKELS (167 aa)) is the Helicase C-terminal domain.

The protein belongs to the SNF2/RAD54 helicase family.

The protein localises to the nucleus. This is an uncharacterized protein from Schizosaccharomyces pombe (strain 972 / ATCC 24843) (Fission yeast).